Consider the following 225-residue polypeptide: Ribose-5-phosphate isomerase A (225 aa).

Residues 33–36 (TGST), 84–87 (DGAD), and 96–99 (KGGG) each bind substrate. Catalysis depends on E105, which acts as the Proton acceptor. K123 contributes to the substrate binding site.

The protein belongs to the ribose 5-phosphate isomerase family. Homodimer.

The enzyme catalyses aldehydo-D-ribose 5-phosphate = D-ribulose 5-phosphate. It functions in the pathway carbohydrate degradation; pentose phosphate pathway; D-ribose 5-phosphate from D-ribulose 5-phosphate (non-oxidative stage): step 1/1. In terms of biological role, catalyzes the reversible conversion of ribose-5-phosphate to ribulose 5-phosphate. This chain is Ribose-5-phosphate isomerase A, found in Halobacterium salinarum (strain ATCC 29341 / DSM 671 / R1).